Here is a 156-residue protein sequence, read N- to C-terminus: 6,7-dimethyl-8-ribityllumazine synthase (156 aa).

5-amino-6-(D-ribitylamino)uracil contacts are provided by residues Trp-28, 60-62 (SFE), and 82-84 (VVV). 87–88 (GT) provides a ligand contact to (2S)-2-hydroxy-3-oxobutyl phosphate. Residue His-90 is the Proton donor of the active site. Phe-115 is a 5-amino-6-(D-ribitylamino)uracil binding site. Arg-129 contacts (2S)-2-hydroxy-3-oxobutyl phosphate.

This sequence belongs to the DMRL synthase family.

The enzyme catalyses (2S)-2-hydroxy-3-oxobutyl phosphate + 5-amino-6-(D-ribitylamino)uracil = 6,7-dimethyl-8-(1-D-ribityl)lumazine + phosphate + 2 H2O + H(+). It participates in cofactor biosynthesis; riboflavin biosynthesis; riboflavin from 2-hydroxy-3-oxobutyl phosphate and 5-amino-6-(D-ribitylamino)uracil: step 1/2. Catalyzes the formation of 6,7-dimethyl-8-ribityllumazine by condensation of 5-amino-6-(D-ribitylamino)uracil with 3,4-dihydroxy-2-butanone 4-phosphate. This is the penultimate step in the biosynthesis of riboflavin. The sequence is that of 6,7-dimethyl-8-ribityllumazine synthase from Kocuria rhizophila (strain ATCC 9341 / DSM 348 / NBRC 103217 / DC2201).